A 648-amino-acid polypeptide reads, in one-letter code: Protein kinase YegI (648 aa).

Residues 15 to 302 (TTLGRELGKG…KAWVAALDSL (288 aa)) form the Protein kinase domain. ATP-binding positions include 21-29 (LGKGGEGAV) and Lys41. Asp143 acts as the Proton acceptor in catalysis.

In terms of processing, autophosphorylated. Dephosphorylated by PphC.

Probable serine/threonine kinase. This Escherichia coli (strain K12) protein is Protein kinase YegI (yegI).